Here is a 715-residue protein sequence, read N- to C-terminus: NADH-ubiquinone oxidoreductase chain 5 (715 aa).

17 consecutive transmembrane segments (helical) span residues 1–21, 30–50, 81–101, 119–139, 140–160, 177–197, 200–220, 241–261, 274–294, 310–330, 331–351, 366–386, 403–423, 487–507, 543–563, 647–667, and 668–688; these read MYLS…FFGR, LITC…FFEV, LTVA…IYSI, LFTF…MFVG, WEGV…RIAA, FLTI…YATV, LAPY…LIGA, TPVS…YLLM, LLLC…IGLF, LGMM…FHLI, NHAF…HAVA, LPLT…FPYM, FSFS…FTTL, GFFL…FGFI, TLFK…ALVL, IVTN…FTFI, and SLLE…LSLT.

It belongs to the complex I subunit 5 family.

It is found in the mitochondrion inner membrane. It catalyses the reaction a ubiquinone + NADH + 5 H(+)(in) = a ubiquinol + NAD(+) + 4 H(+)(out). Core subunit of the mitochondrial membrane respiratory chain NADH dehydrogenase (Complex I) that is believed to belong to the minimal assembly required for catalysis. Complex I functions in the transfer of electrons from NADH to the respiratory chain. The immediate electron acceptor for the enzyme is believed to be ubiquinone. This chain is NADH-ubiquinone oxidoreductase chain 5 (ndh-5), found in Neurospora crassa (strain ATCC 24698 / 74-OR23-1A / CBS 708.71 / DSM 1257 / FGSC 987).